A 57-amino-acid polypeptide reads, in one-letter code: Toxin GhoT (57 aa).

2 consecutive transmembrane segments (helical) span residues 7–27 and 37–57; these read ILIFYVIGVNISFVIIWFISH and AFLVGITWPMSLPVALLFSLF.

The protein belongs to the GhoT/OrtT toxin family.

It is found in the cell inner membrane. Toxic component of a type V toxin-antitoxin (TA) system. Causes membrane damage when induced by MqsR, slowing cell growth and leading to the formation of dormant persister cells; involved with GhoS, its antitoxin, in reducing cell growth during antibacterial stress. Its toxic effects are neutralized by GhoS, which digests ghoT transcripts in a sequence-specific manner. This Escherichia coli O157:H7 protein is Toxin GhoT.